We begin with the raw amino-acid sequence, 391 residues long: Aspartic protease 17 (391 aa).

A signal peptide spans Met-1–Ala-15. The 321-residue stretch at Tyr-65 to Ala-385 folds into the Peptidase A1 domain. N-linked (GlcNAc...) asparagine glycosylation is present at Asn-68. The active site involves Asp-83. An N-linked (GlcNAc...) asparagine glycan is attached at Asn-108. Asp-274 is a catalytic residue. Cys-309 and Cys-345 are joined by a disulfide.

The protein belongs to the peptidase A1 family. In terms of tissue distribution, expressed in intestinal cells.

It localises to the secreted. Functionally, aspartic proteinase. In Caenorhabditis elegans, this protein is Aspartic protease 17.